The sequence spans 360 residues: UDP-N-acetylglucosamine--N-acetylmuramyl-(pentapeptide) pyrophosphoryl-undecaprenol N-acetylglucosamine transferase (360 aa).

UDP-N-acetyl-alpha-D-glucosamine-binding residues include serine 198 and glutamine 289.

The protein belongs to the glycosyltransferase 28 family. MurG subfamily.

The protein localises to the cell membrane. The catalysed reaction is Mur2Ac(oyl-L-Ala-gamma-D-Glu-L-Lys-D-Ala-D-Ala)-di-trans,octa-cis-undecaprenyl diphosphate + UDP-N-acetyl-alpha-D-glucosamine = beta-D-GlcNAc-(1-&gt;4)-Mur2Ac(oyl-L-Ala-gamma-D-Glu-L-Lys-D-Ala-D-Ala)-di-trans,octa-cis-undecaprenyl diphosphate + UDP + H(+). It functions in the pathway cell wall biogenesis; peptidoglycan biosynthesis. In terms of biological role, cell wall formation. Catalyzes the transfer of a GlcNAc subunit on undecaprenyl-pyrophosphoryl-MurNAc-pentapeptide (lipid intermediate I) to form undecaprenyl-pyrophosphoryl-MurNAc-(pentapeptide)GlcNAc (lipid intermediate II). The chain is UDP-N-acetylglucosamine--N-acetylmuramyl-(pentapeptide) pyrophosphoryl-undecaprenol N-acetylglucosamine transferase from Streptococcus pyogenes serotype M12 (strain MGAS2096).